We begin with the raw amino-acid sequence, 321 residues long: uncharacterized protein (321 aa).

The span at 1–12 (MSMFLKKQKKTK) shows a compositional bias: basic residues. Disordered stretches follow at residues 1–59 (MSMF…MRKT) and 71–289 (EDCT…GPED). Over residues 50-59 (DGIKETMRKT) the composition is skewed to basic and acidic residues. Residues 99–115 (DDSDSESSEDGGEDDEE) are compositionally biased toward acidic residues. Residues 156 to 175 (SDSSSSSSSSSDSESSSSSD) show a composition bias toward low complexity. Basic and acidic residues predominate over residues 179–189 (DGDRSTPEPDI). Residues 231–242 (EPSPLRAAAAAA) show a composition bias toward low complexity.

This is an uncharacterized protein from Equus caballus (Horse).